A 184-amino-acid chain; its full sequence is Lactoylglutathione lyase (184 aa).

At Ala-2 the chain carries N-acetylalanine. A disulfide bridge links Cys-19 with Cys-20. One can recognise a VOC domain in the interval 31 to 177 (LLQQTMLRIK…DGYWIEILNP (147 aa)). Residues Gln-34 and Arg-38 each contribute to the substrate site. Residue Gln-34 coordinates Zn(2+). Glu-100 is a Zn(2+) binding site. Asn-104 is a binding site for substrate. Thr-107 bears the Phosphothreonine mark. Substrate is bound by residues Arg-123 and His-127. His-127 provides a ligand contact to Zn(2+). An S-glutathionyl cysteine modification is found at Cys-139. Lys-148 is modified (N6-acetyllysine; alternate). Lys-148 carries the N6-succinyllysine; alternate modification. Residue 157–158 (KM) participates in substrate binding. Glu-173 serves as a coordination point for Zn(2+). The active-site Proton donor/acceptor is the Glu-173.

This sequence belongs to the glyoxalase I family. As to quaternary structure, homodimer. The cofactor is Zn(2+). Glutathionylation at Cys-139 inhibits enzyme activity. Post-translationally, phosphorylated at Thr-107 in the presence of CaMK2. However, this is a consensus site for phosphorylation by CK2 so phosphorylation may be mediated by CK2 rather than CaMK2. Phosphorylation is induced by TNF and suppresses the TNF-induced transcriptional activity of NF-kappa-B. In terms of processing, exists in a nitric oxide (NO)-modified form. The exact nature of the modification is unknown, but it suppresses the TNF-induced transcriptional activity of NF-kappa-B.

It carries out the reaction (R)-S-lactoylglutathione = methylglyoxal + glutathione. It functions in the pathway secondary metabolite metabolism; methylglyoxal degradation; (R)-lactate from methylglyoxal: step 1/2. Functionally, catalyzes the conversion of hemimercaptal, formed from methylglyoxal and glutathione, to S-lactoylglutathione. Involved in the regulation of TNF-induced transcriptional activity of NF-kappa-B. Required for normal osteoclastogenesis. In Rattus norvegicus (Rat), this protein is Lactoylglutathione lyase (Glo1).